A 318-amino-acid polypeptide reads, in one-letter code: Putative S-adenosyl-L-methionine-dependent methyltransferase BCG_0781c (318 aa).

S-adenosyl-L-methionine-binding positions include Asp135 and 164 to 165 (DL).

The protein belongs to the UPF0677 family.

Its function is as follows. Exhibits S-adenosyl-L-methionine-dependent methyltransferase activity. This Mycobacterium bovis (strain BCG / Pasteur 1173P2) protein is Putative S-adenosyl-L-methionine-dependent methyltransferase BCG_0781c.